The sequence spans 177 residues: B9 domain-containing protein 2 (177 aa).

One can recognise a C2 B9-type domain in the interval 2–118 (AEVHIIGQIL…EIGTWKVAPN (117 aa)).

The protein belongs to the B9D family. In terms of assembly, probable component of the tectonic-like complex (also named MKS complex), composed of B9d1, B9d2, Cc2d2a, Mks1 and tctn. As to expression, expressed in chordotonal neurons in the antennae (at protein level). Expressed in spermatids (at protein level).

It is found in the cytoplasm. Its subcellular location is the cytoskeleton. The protein resides in the cilium basal body. Probable component of the tectonic-like complex (also named MKS complex), a complex localized at the transition zone of primary cilia. Has a role in ciliary structure and function. This chain is B9 domain-containing protein 2, found in Drosophila melanogaster (Fruit fly).